The sequence spans 424 residues: O-methyltransferase aunD (424 aa).

Aspartate 275 contributes to the S-adenosyl-L-methionine binding site. Catalysis depends on histidine 326, which acts as the Proton acceptor.

This sequence belongs to the class I-like SAM-binding methyltransferase superfamily. Cation-independent O-methyltransferase family.

It functions in the pathway secondary metabolite biosynthesis. In terms of biological role, O-methyltransferase; part of the gene cluster that mediates the biosynthesis of aurasperone B, a dimeric gamma-naphthopyrone. The first step in the biosynthesis of aurasperone B is the production of gamma-naphthopyrone precursor YWA1 by the non-reducing polyketide synthase albA, via condensation of one acetyl-CoA starter unit with 6 malonyl-CoA units. YWA1 is then methylated by aunE at position C-6 to yield foncesin which is further methylated at position C-8 by aunD to produce fonsecin B. A key enzyme in the biosynthetic pathway is the cytochrome P450 monooxygenase aunB which catalyzes the oxidative dimerization of fonsecin B to aurasperone B. AunB also catalyzes the oxidative dimerization of rubrofusarin B into aurasperone A. The polypeptide is O-methyltransferase aunD (Aspergillus niger (strain ATCC MYA-4892 / CBS 513.88 / FGSC A1513)).